The chain runs to 578 residues: Probable arginine--tRNA ligase, mitochondrial (578 aa).

The transit peptide at 1–16 (MACGFRRSIACQLSRV) directs the protein to the mitochondrion. L-arginine contacts are provided by residues 133 to 135 (SPN), histidine 144, tyrosine 322, aspartate 326, and glutamine 350. The short motif at 133 to 144 (SPNIAKKFHVGH) is the 'HIGH' region element. Lysine 568 is modified (N6-acetyllysine).

This sequence belongs to the class-I aminoacyl-tRNA synthetase family.

Its subcellular location is the mitochondrion membrane. It catalyses the reaction tRNA(Arg) + L-arginine + ATP = L-arginyl-tRNA(Arg) + AMP + diphosphate. In terms of biological role, catalyzes the attachment of arginine to tRNA(Arg) in a two-step reaction: arginine is first activated by ATP to form Arg-AMP and then transferred to the acceptor end of tRNA(Arg). The protein is Probable arginine--tRNA ligase, mitochondrial (Rars2) of Mus musculus (Mouse).